The sequence spans 59 residues: UPF0434 protein Mmc1_0910 (59 aa).

This sequence belongs to the UPF0434 family.

In Magnetococcus marinus (strain ATCC BAA-1437 / JCM 17883 / MC-1), this protein is UPF0434 protein Mmc1_0910.